A 716-amino-acid polypeptide reads, in one-letter code: Dynein axonemal intermediate chain 7 (716 aa).

Belongs to the DNAI7 family. Part of the multisubunit axonemal dynein complex formed at least of two heavy chains and a number of intermediate and light chains. Interacts with tubulin. Associates with microtubule. Post-translationally, ubiquitinated. Ubiquitination leads to its degradation through the 26S proteasome. Ubiquitin-proteasome-mediated DNAI7 degradation occurs in mitosis.

The protein localises to the cell projection. It is found in the cilium. Its subcellular location is the cytoplasm. Functionally, via its association with the multisubunit axonemal dynein complex, is potentially involved in the regulation of cilia function. May also act as a cell cycle regulator. The polypeptide is Dynein axonemal intermediate chain 7 (Homo sapiens (Human)).